Reading from the N-terminus, the 365-residue chain is Isopentenyl-diphosphate delta-isomerase (365 aa).

4-5 (RK) provides a ligand contact to substrate. Residues 62-64 (GMT), Ser92, and Asn121 each bind FMN. A substrate-binding site is contributed by 92–94 (SQR). Gln155 is a binding site for substrate. Residue Glu156 coordinates Mg(2+). FMN-binding positions include Lys187, Thr216, 267-269 (GVR), and 288-289 (AL).

This sequence belongs to the IPP isomerase type 2 family. Homooctamer. Dimer of tetramers. It depends on FMN as a cofactor. The cofactor is NADPH. Requires Mg(2+) as cofactor.

Its subcellular location is the cytoplasm. It catalyses the reaction isopentenyl diphosphate = dimethylallyl diphosphate. Functionally, involved in the biosynthesis of isoprenoids. Catalyzes the 1,3-allylic rearrangement of the homoallylic substrate isopentenyl (IPP) to its allylic isomer, dimethylallyl diphosphate (DMAPP). The protein is Isopentenyl-diphosphate delta-isomerase of Methanopyrus kandleri (strain AV19 / DSM 6324 / JCM 9639 / NBRC 100938).